Consider the following 159-residue polypeptide: MLLLSCNLEEDDLKSLLETGASVNAPPDPQEQSPAHLAAGGGLACFLLWQLQTGADLNQQDVLGETPLHKAAKVGSLDCLSLLVASDVQIGVCNKNGQTAEDLAWSYGFPECARFLTMIKCMQTARSSGEQQERDPRAPVLRQKRSFRTVESGVMKRKC.

3 ANK repeats span residues 1-25 (MLLLSCNLEEDDLKSLLETGASVNA), 30-59 (QEQSPAHLAAGGGLACFLLWQLQTGADLNQ), and 63-92 (LGETPLHKAAKVGSLDCLSLLVASDVQIGV). A Nuclear localization signal motif is present at residues 130–150 (EQQERDPRAPVLRQKRSFRTV).

In terms of processing, ubiquitinated by the CRL2(FEM1B) complex, leading to its degradation. As to expression, expressed testis, ovary, uterus, kidney, liver, but not in other tissues.

Its subcellular location is the nucleus. The protein localises to the cytoplasm. This chain is Ankyrin repeat domain-containing protein 37, found in Mus musculus (Mouse).